The primary structure comprises 339 residues: MSKPKVGINGFGRIGRLVLRAAVEKDTVDVVAVNDPFINIDYMVYMFKYDSTHGRFKGSVSAEGGKLIVTNGKTTHHISVHNSKDPAEIPWGVDGAEYVVESTGVFTTTDKASAHLKGGAKKVIISAPSADAPMFVMGVNNDMYDKANNHIISNASCTTNCLAPLAKVIHDKFGIIEGLMTTVHATTATQKTVDGPSGKLWRDGRGAGQNIIPASTGAAKAVGKVIPGLNGKLTGMANRVPTPDVSVVDLTCRLQKGATMDEIKAAVKEAANGPMKGILEYTEDQVVSTDFTGDTHSSIFDSLACISLNPNFVKLIAWYDNEYGYSNRVVDLISYIASR.

NAD(+)-binding positions include 13–14, aspartate 35, and lysine 84; that span reads RI. Residues 156–158, threonine 187, 216–217, and arginine 239 contribute to the D-glyceraldehyde 3-phosphate site; these read SCT and TG. Cysteine 157 acts as the Nucleophile in catalysis. Asparagine 321 is an NAD(+) binding site.

Belongs to the glyceraldehyde-3-phosphate dehydrogenase family. Homotetramer.

Its subcellular location is the cytoplasm. The enzyme catalyses D-glyceraldehyde 3-phosphate + phosphate + NAD(+) = (2R)-3-phospho-glyceroyl phosphate + NADH + H(+). It functions in the pathway carbohydrate degradation; glycolysis; pyruvate from D-glyceraldehyde 3-phosphate: step 1/5. The sequence is that of Glyceraldehyde-3-phosphate dehydrogenase (G3PD) from Brugia malayi (Filarial nematode worm).